Here is a 96-residue protein sequence, read N- to C-terminus: UPF0235 protein PC1_3453 (96 aa).

Belongs to the UPF0235 family.

This Pectobacterium carotovorum subsp. carotovorum (strain PC1) protein is UPF0235 protein PC1_3453.